Here is a 317-residue protein sequence, read N- to C-terminus: METWQEVTVHVHRDAQEAVSHVLIETGSQGVAIADSADYIGQKDRFGELYPDVEQSDMIAITAYYPSSTNLADVIATINEQLAELASFGLQVGQVTVDSQELAEEDWADNWKKYYEPARITHDLTIVPSWTDYDASAGEKVIKLDPGMAFGTGTHPTTKMSLFALEQVLRGGETVIDVGTGSGVLSIASSLLGAKTIYAYDLDDVAVRVAQENIDLNQGTDNIHVAAGDLLKGVSQEADVIVANILADILVLLTDDAYRLVKKEGYLILSGIISEKLDMVLETAFSAGFFLETHMVQGEWNALVFKKTDDISGVIGG.

Positions 158, 179, 201, and 244 each coordinate S-adenosyl-L-methionine.

It belongs to the methyltransferase superfamily. PrmA family.

Its subcellular location is the cytoplasm. It catalyses the reaction L-lysyl-[protein] + 3 S-adenosyl-L-methionine = N(6),N(6),N(6)-trimethyl-L-lysyl-[protein] + 3 S-adenosyl-L-homocysteine + 3 H(+). Its function is as follows. Methylates ribosomal protein L11. The sequence is that of Ribosomal protein L11 methyltransferase from Streptococcus pyogenes serotype M12 (strain MGAS2096).